The sequence spans 110 residues: Ribonuclease H2 subunit C (110 aa).

A disordered region spans residues leucine 45–isoleucine 69. A compositionally biased stretch (low complexity) spans alanine 51–asparagine 66.

This sequence belongs to the RNase H2 subunit C family. Highly divergent. As to quaternary structure, the RNase 2 complex is a heterotrimer composed of the catalytic subunit RNH201 and of the non-catalytic subunits RNH202 and RNH203.

The protein localises to the cytoplasm. Its subcellular location is the nucleus. Non catalytic subunit of RNase H2, an endonuclease that specifically degrades the RNA of RNA:DNA hybrids. Participates in DNA replication, possibly by mediating the removal of lagging-strand Okazaki fragment RNA primers during DNA replication. Mediates the excision of single ribonucleotides from DNA:RNA duplexes. In Saccharomyces cerevisiae (strain ATCC 204508 / S288c) (Baker's yeast), this protein is Ribonuclease H2 subunit C (RNH203).